The sequence spans 591 residues: L-fucose isomerase (591 aa).

Catalysis depends on proton acceptor residues E337 and D361. Mn(2+) contacts are provided by E337, D361, and H528.

This sequence belongs to the L-fucose isomerase family. Homohexamer. The cofactor is Mn(2+).

It is found in the cytoplasm. The enzyme catalyses L-fucose = L-fuculose. It participates in carbohydrate degradation; L-fucose degradation; L-lactaldehyde and glycerone phosphate from L-fucose: step 1/3. Functionally, converts the aldose L-fucose into the corresponding ketose L-fuculose. This is L-fucose isomerase from Salmonella paratyphi A (strain ATCC 9150 / SARB42).